The primary structure comprises 121 residues: Fluoride-specific ion channel FluC 3 (121 aa).

Transmembrane regions (helical) follow at residues 3-23, 40-60, 69-89, and 101-121; these read VFLPILVCLCGGVGASCRYLL, FTINLIAGFLAGLVAALALGG, VLATGFLGGFSTFSTAINEMV, and AAYLVLSLGVPVVAAACGFLV. Na(+) is bound by residues Gly76 and Ser79.

It belongs to the fluoride channel Fluc/FEX (TC 1.A.43) family.

The protein resides in the cell membrane. The enzyme catalyses fluoride(in) = fluoride(out). Its activity is regulated as follows. Na(+) is not transported, but it plays an essential structural role and its presence is essential for fluoride channel function. Its function is as follows. Fluoride-specific ion channel. Important for reducing fluoride concentration in the cell, thus reducing its toxicity. The protein is Fluoride-specific ion channel FluC 3 of Bifidobacterium longum (strain NCC 2705).